Here is a 348-residue protein sequence, read N- to C-terminus: D-alanine--D-alanine ligase (348 aa).

The ATP-grasp domain maps to 132-334; it reads KRVLESIGIP…YPDLIEELVT (203 aa). ATP is bound at residue 162-217; sequence LARLTFPIFVKPANMGSSVGISKAQTKVELRKAIQLALTYDSRVLIEQGVVAREIE. Residues Asp288, Glu301, and Asn303 each contribute to the Mg(2+) site.

Belongs to the D-alanine--D-alanine ligase family. It depends on Mg(2+) as a cofactor. Mn(2+) serves as cofactor.

It is found in the cytoplasm. It catalyses the reaction 2 D-alanine + ATP = D-alanyl-D-alanine + ADP + phosphate + H(+). It functions in the pathway cell wall biogenesis; peptidoglycan biosynthesis. Cell wall formation. This chain is D-alanine--D-alanine ligase, found in Streptococcus pyogenes serotype M12 (strain MGAS2096).